A 181-amino-acid chain; its full sequence is Malignant T-cell-amplified sequence 1 (181 aa).

Threonine 81 carries the post-translational modification Phosphothreonine; by MAPK1 and MAPK3. Residues 92–171 (LPHQQVDKGA…IGIENIHYLN (80 aa)) enclose the PUA domain. Serine 118 bears the Phosphoserine; by CDK1 mark.

It belongs to the MCTS1 family. As to quaternary structure, interacts (via PUA domain) with DENR; the complex regulates translation reinitiation. Post-translationally, phosphorylation is critical for stabilization and promotion of cell proliferation. In terms of tissue distribution, ubiquitous. Over-expressed in T-cell lymphoid cell lines and in non-Hodgkin lymphoma cell lines as well as in a subset of primary large B-cell lymphomas.

Its subcellular location is the cytoplasm. Functionally, translation regulator forming a complex with DENR to promote translation reinitiation. Translation reinitiation is the process where the small ribosomal subunit remains attached to the mRNA following termination of translation of a regulatory upstream ORF (uORF), and resume scanning on the same mRNA molecule to initiate translation of a downstream ORF, usually the main ORF (mORF). The MCTS1/DENR complex is pivotal to two linked mechanisms essential for translation reinitiation. Firstly, the dissociation of deacylated tRNAs from post-termination 40S ribosomal complexes during ribosome recycling. Secondly, the recruitment in an EIF2-independent manner of aminoacylated initiator tRNA to P site of 40S ribosomes for a new round of translation. This regulatory mechanism governs the translation of more than 150 genes which translation reinitiation is MCTS1/DENR complex-dependent. Consequently, modulates various unrelated biological processes including cell cycle regulation and DNA damage signaling and repair. Notably, it positively regulates interferon gamma immunity to mycobacteria by enhancing the translation of JAK2. The protein is Malignant T-cell-amplified sequence 1 (MCTS1) of Homo sapiens (Human).